The primary structure comprises 394 residues: Phosphopentomutase (394 aa).

Positions 15, 288, 293, 329, 330, and 341 each coordinate Mn(2+).

This sequence belongs to the phosphopentomutase family. The cofactor is Mn(2+).

It is found in the cytoplasm. The catalysed reaction is 2-deoxy-alpha-D-ribose 1-phosphate = 2-deoxy-D-ribose 5-phosphate. It carries out the reaction alpha-D-ribose 1-phosphate = D-ribose 5-phosphate. It functions in the pathway carbohydrate degradation; 2-deoxy-D-ribose 1-phosphate degradation; D-glyceraldehyde 3-phosphate and acetaldehyde from 2-deoxy-alpha-D-ribose 1-phosphate: step 1/2. Its function is as follows. Isomerase that catalyzes the conversion of deoxy-ribose 1-phosphate (dRib-1-P) and ribose 1-phosphate (Rib-1-P) to deoxy-ribose 5-phosphate (dRib-5-P) and ribose 5-phosphate (Rib-5-P), respectively. This chain is Phosphopentomutase (drm), found in Bacillus subtilis (strain 168).